The primary structure comprises 876 residues: DDB1- and CUL4-associated factor 6 (876 aa).

WD repeat units lie at residues Val-49–Thr-88, Gly-92–Arg-133, Cys-139–Lys-179, Asn-189–Thr-229, and Asn-251–Leu-290. 2 stretches are compositionally biased toward basic and acidic residues: residues Arg-288 to Arg-303 and Leu-312 to Glu-334. Disordered stretches follow at residues Arg-288–Ser-340, Glu-355–Asn-391, Leu-408–Thr-485, Trp-498–Leu-645, and Glu-658–Asp-691. Ser-336 is modified (phosphoserine). Polar residues-rich tracts occupy residues Thr-375–Asn-391 and Gln-409–Ala-422. Basic and acidic residues predominate over residues His-456–Ser-466. The segment covering Ser-499–Ser-510 has biased composition (low complexity). A compositionally biased stretch (basic and acidic residues) spans Ser-534 to Glu-544. Composition is skewed to polar residues over residues Glu-550–Leu-562, Asp-571–Ser-584, Glu-603–His-613, and Pro-621–Leu-645. At Ser-665 the chain carries Phosphoserine. Thr-670 carries the phosphothreonine modification. The residue at position 673 (Ser-673) is a Phosphoserine. An IQ domain is found at Arg-692–Arg-721. WD repeat units lie at residues Asn-734–Leu-772 and Ala-775–Asn-814. Phosphoserine is present on residues Ser-863 and Ser-866.

As to quaternary structure, interacts with the nuclear receptors NR3C1 and AR in the presence of ligand. Interacts with DDB1, CUL4A and CUL4B.

The protein resides in the nucleus. The protein operates within protein modification; protein ubiquitination. Functionally, ligand-dependent coactivator of nuclear receptors. Enhance transcriptional activity of the nuclear receptors NR3C1 and AR. May function as a substrate receptor for CUL4-DDB1 E3 ubiquitin-protein ligase complex. In Mus musculus (Mouse), this protein is DDB1- and CUL4-associated factor 6 (Dcaf6).